A 90-amino-acid polypeptide reads, in one-letter code: Elongation factor 1-beta (90 aa).

Belongs to the EF-1-beta/EF-1-delta family.

In terms of biological role, promotes the exchange of GDP for GTP in EF-1-alpha/GDP, thus allowing the regeneration of EF-1-alpha/GTP that could then be used to form the ternary complex EF-1-alpha/GTP/AAtRNA. This Sulfolobus acidocaldarius (strain ATCC 33909 / DSM 639 / JCM 8929 / NBRC 15157 / NCIMB 11770) protein is Elongation factor 1-beta.